We begin with the raw amino-acid sequence, 201 residues long: Holliday junction branch migration complex subunit RuvA (201 aa).

The domain I stretch occupies residues 1-64; the sequence is MYEYIKGKYI…QDFIGLYGFL (64 aa). Residues 65 to 143 are domain II; that stretch reads TKDELEMFNK…STDISKGNSE (79 aa). A flexible linker region spans residues 144–154; the sequence is INNLDVDYDEH. The interval 154-201 is domain III; the sequence is HSKKLEEVRFALNSLGYSEKETDRAINNVDKSEGIENIIKSCLRFLMN.

This sequence belongs to the RuvA family. In terms of assembly, homotetramer. Forms an RuvA(8)-RuvB(12)-Holliday junction (HJ) complex. HJ DNA is sandwiched between 2 RuvA tetramers; dsDNA enters through RuvA and exits via RuvB. An RuvB hexamer assembles on each DNA strand where it exits the tetramer. Each RuvB hexamer is contacted by two RuvA subunits (via domain III) on 2 adjacent RuvB subunits; this complex drives branch migration. In the full resolvosome a probable DNA-RuvA(4)-RuvB(12)-RuvC(2) complex forms which resolves the HJ.

The protein resides in the cytoplasm. Functionally, the RuvA-RuvB-RuvC complex processes Holliday junction (HJ) DNA during genetic recombination and DNA repair, while the RuvA-RuvB complex plays an important role in the rescue of blocked DNA replication forks via replication fork reversal (RFR). RuvA specifically binds to HJ cruciform DNA, conferring on it an open structure. The RuvB hexamer acts as an ATP-dependent pump, pulling dsDNA into and through the RuvAB complex. HJ branch migration allows RuvC to scan DNA until it finds its consensus sequence, where it cleaves and resolves the cruciform DNA. The polypeptide is Holliday junction branch migration complex subunit RuvA (Clostridium acetobutylicum (strain ATCC 824 / DSM 792 / JCM 1419 / IAM 19013 / LMG 5710 / NBRC 13948 / NRRL B-527 / VKM B-1787 / 2291 / W)).